The chain runs to 64 residues: Large ribosomal subunit protein bL35 (64 aa).

Positions methionine 1–phenylalanine 27 are disordered.

Belongs to the bacterial ribosomal protein bL35 family.

This Azotobacter vinelandii (strain DJ / ATCC BAA-1303) protein is Large ribosomal subunit protein bL35.